Reading from the N-terminus, the 1389-residue chain is Superkiller protein 3 (1389 aa).

3 TPR repeats span residues 2 to 35, 36 to 69, and 90 to 123; these read AKPA…DANN, YNAN…DEKA, and HKIT…VKKY. The tract at residues 326 to 355 is disordered; sequence SNNSAELAKETKEEDDSENSVDKKENEEDI. TPR repeat units follow at residues 381-414, 429-463, 465-497, 498-530, 538-574, 575-608, 650-683, 684-717, 719-751, 759-792, 931-963, 964-997, 999-1031, 1124-1157, and 1167-1200; these read TIIS…LKRL, FQLC…DPRN, HALL…HEND, PSLS…LLSM, AEAY…DPNY, APAY…DASQ, NWHH…SPKD, TNAW…DPDD, YVKY…RSKE, AETY…CCNV, VFWN…NERS, SGVW…DPDN, QAWL…SSGK, IDAK…LEGE, and LGLN…SDSN.

As to quaternary structure, component of the SKI complex composed of at least ski2, ski3 and ski8. The SKI complex interacts with ski7, which makes the link between the SKI complex and the exosome in order to perform mRNA degradation.

The protein localises to the cytoplasm. Its function is as follows. Component of the SKI complex involved in 3'-mRNA degradation pathway. The chain is Superkiller protein 3 (ski3) from Schizosaccharomyces pombe (strain 972 / ATCC 24843) (Fission yeast).